We begin with the raw amino-acid sequence, 292 residues long: Ribosomal protein L11 methyltransferase (292 aa).

S-adenosyl-L-methionine-binding residues include Thr138, Gly159, Asp181, and Asn225.

Belongs to the methyltransferase superfamily. PrmA family.

It is found in the cytoplasm. It carries out the reaction L-lysyl-[protein] + 3 S-adenosyl-L-methionine = N(6),N(6),N(6)-trimethyl-L-lysyl-[protein] + 3 S-adenosyl-L-homocysteine + 3 H(+). Methylates ribosomal protein L11. The protein is Ribosomal protein L11 methyltransferase of Leuconostoc citreum (strain KM20).